The following is a 667-amino-acid chain: UvrABC system protein B (667 aa).

A Helicase ATP-binding domain is found at 28 to 185 (NNFKQGLKEQ…NKLIELKYQR (158 aa)). Residue 41–48 (GATGTGKT) participates in ATP binding. The Beta-hairpin motif lies at 94-117 (YYDYYQPEAYVASSDTYIEKDSKI). The region spanning 432-594 (QMDDLYFEIK…VTPTALNKTI (163 aa)) is the Helicase C-terminal domain. The 36-residue stretch at 629–664 (NKEIKRLQKTMKEAAKALDFEKAATLRDLILDLEKK) folds into the UVR domain.

It belongs to the UvrB family. Forms a heterotetramer with UvrA during the search for lesions. Interacts with UvrC in an incision complex.

The protein localises to the cytoplasm. The UvrABC repair system catalyzes the recognition and processing of DNA lesions. A damage recognition complex composed of 2 UvrA and 2 UvrB subunits scans DNA for abnormalities. Upon binding of the UvrA(2)B(2) complex to a putative damaged site, the DNA wraps around one UvrB monomer. DNA wrap is dependent on ATP binding by UvrB and probably causes local melting of the DNA helix, facilitating insertion of UvrB beta-hairpin between the DNA strands. Then UvrB probes one DNA strand for the presence of a lesion. If a lesion is found the UvrA subunits dissociate and the UvrB-DNA preincision complex is formed. This complex is subsequently bound by UvrC and the second UvrB is released. If no lesion is found, the DNA wraps around the other UvrB subunit that will check the other stand for damage. This Aster yellows witches'-broom phytoplasma (strain AYWB) protein is UvrABC system protein B.